The sequence spans 128 residues: Fluoride-specific ion channel FluC (128 aa).

Helical transmembrane passes span 4–24, 37–57, 63–83, and 99–119; these read LILAIIVGCGGFIGAALRYLI, PYGTLIVNIVGAIIIGFIMDI, LISGHTKLFLTTGMMGGLTTF, and ILMGCTNAALNLGLSLVGVII. Na(+) contacts are provided by glycine 78 and threonine 81.

This sequence belongs to the fluoride channel Fluc/FEX (TC 1.A.43) family.

The protein resides in the cell membrane. The catalysed reaction is fluoride(in) = fluoride(out). Its activity is regulated as follows. Na(+) is not transported, but it plays an essential structural role and its presence is essential for fluoride channel function. Functionally, fluoride-specific ion channel. Important for reducing fluoride concentration in the cell, thus reducing its toxicity. The protein is Fluoride-specific ion channel FluC of Clostridium novyi (strain NT).